The primary structure comprises 190 residues: Vacuolar protein sorting-associated protein 29 (190 aa).

Belongs to the VPS29 family. In terms of assembly, component of the retromer complex which consists of VPS29 (MAG1), VPS26 (VPS26A or VPS26B), VPS35 (VPS35A or VPS35B or VPS35C), VPS5/17 (SNX1 or SNX2A or SNX2B). Component of a retromer subcomplex consisting of VPS29 (MAG1), VPS26 (VPS26A or VPS26B), VPS35 (VPS35A or VPS35B or VPS35C).

The protein resides in the cytoplasm. It is found in the endosome membrane. Its subcellular location is the prevacuolar compartment membrane. The protein localises to the golgi apparatus. It localises to the trans-Golgi network membrane. The protein resides in the late endosome membrane. In terms of biological role, plays a role in vesicular protein sorting. Component of the membrane-associated retromer complex which is essential in endosome-to-Golgi retrograde transport. Required for the auxin-carrier protein PIN2 sorting to the lytic vacuolar pathway and the PIN1 recycling to the plasma membrane, thus influencing auxin transport orientation. Also involved in the efficient sorting of seed storage proteins globulin 12S and albumin 2S. The VPS29-VPS26-VPS35 subcomplex may be involved in recycling of specific cargos from endosome to the plasma membrane. This chain is Vacuolar protein sorting-associated protein 29, found in Arabidopsis thaliana (Mouse-ear cress).